The primary structure comprises 818 residues: MESEQLFHRGYYRNSYNSITSASSDEELLDGAGAIMDFQTSEDDNLLDGDTAAGTHYTMTNGGSINSSTHLLDLLDEPIPGVGTYDDFHTIDWVREKCKDRERHRRINSKKKESAWEMTKSLYDAWSGWLVVTLTGLASGALAGLIDIAADWMTDLKEGICLSALWYNHEQCCWGSNETTFEERDKCPQWKTWAELIIGQAEGPGSYIMNYIMYIFWALSFAFLAVSLVKVFAPYACGSGIPEIKTILSGFIIRGYLGKWTLMIKTITLVLAVASGLSLGKEGPLVHVACCCGNIFSYLFPKYSTNEAKKREVLSAASAAGVSVAFGAPIGGVLFSLEEVSYYFPLKTLWRSFFAALVAAFVLRSINPFGNSRLVLFYVEYHTPWYLFELFPFILLGVFGGLWGAFFIRANIAWCRRRKSTKFGKYPVLEVIIVAAITAVIAFPNPYTRLNTSELIKELFTDCGPLESSSLCDYRNDMNASKIVDDIPDRPAGVGVYSAIWQLCLALIFKIIMTVFTFGIKVPSGLFIPSMAIGAIAGRIVGIAVEQLAYYHHDWFIFKEWCEVGADCITPGLYAMVGAAACLGGVTRMTVSLVVIVFELTGGLEYIVPLMAAVMTSKWVGDAFGREGIYEAHIRLNGYPFLDAKEEFTHTTLAADVMRPRRSDPPLAVLTQDNMTVDDIENMINETSYNGFPVIMSKESQRLVGFALRRDLTIAIESARKKQEGVVGSSRVCFAQHTPSLPAESPRPLKLRSILDMSPFTVTDHTPMEIVVDIFRKLGLRQCLVTHNGRLLGIITKKDILRHMAQTANQDPASIMFN.

Over methionine 1–alanine 125 the chain is Cytoplasmic. Short sequence motifs (di-leucine internalization motif; mediates targeting to late endosome and lysosome membranes) lie at residues leucine 28–leucine 29, leucine 46–leucine 47, and leucine 71–leucine 75. Residues tryptophan 126–serine 163 traverse the membrane as a helical segment. Residue asparagine 177 is glycosylated (N-linked (GlcNAc...) asparagine). The chain crosses the membrane as a helical span at residues methionine 209–phenylalanine 232. The Selectivity filter part_1 motif lies at glycine 238–proline 242. Residue serine 239 participates in chloride binding. An intramembrane region (helical) is located at residues isoleucine 241–leucine 248. Transmembrane regions (helical) follow at residues glycine 258–glycine 276 and glutamate 282–proline 301. The short motif at glycine 280–proline 284 is the Selectivity filter part_2 element. 2 intramembrane regions (helical) span residues valine 313 to alanine 325 and proline 329 to leucine 337. 3 helical membrane passes run leucine 349–asparagine 367, phenylalanine 391–arginine 416, and phenylalanine 423–phenylalanine 443. N-linked (GlcNAc...) asparagine glycosylation is found at asparagine 451 and asparagine 479. Transmembrane regions (helical) follow at residues isoleucine 500–isoleucine 520 and glycine 525–alanine 544. A Selectivity filter part_3 motif is present at residues glycine 525–proline 529. Phenylalanine 527 provides a ligand contact to chloride. 2 consecutive intramembrane regions (helical) follow at residues glycine 572 to valine 586 and threonine 590 to threonine 601. An intramembrane region (note=Loop between two helices) is located at residues glycine 602 to glutamate 605. A helical membrane pass occupies residues tyrosine 606–phenylalanine 624. Residues glycine 625–asparagine 818 lie on the Cytoplasmic side of the membrane. Tyrosine 630 is a chloride binding site. CBS domains follow at residues methionine 658–lysine 722 and leucine 755–proline 812. ATP is bound by residues tyrosine 689 to glycine 691 and threonine 796 to aspartate 799.

This sequence belongs to the chloride channel (TC 2.A.49) family. ClC-3/CLCN3 subfamily. Monomer and homodimer. Forms heterodimers with CLCN4. Post-translationally, N-glycosylated. As to expression, abundant in brain, especially in the olfactory bulb, hippocampus, and cerebellum. A moderate expression is seen in the lung, kidney and adrenal gland.

It is found in the lysosome membrane. The protein resides in the late endosome membrane. It localises to the cell membrane. Its subcellular location is the early endosome membrane. Its function is as follows. Strongly outwardly rectifying, electrogenic H(+)/Cl(-)exchanger which mediates the exchange of chloride ions against protons. The CLC channel family contains both chloride channels and proton-coupled anion transporters that exchange chloride or another anion for protons. The presence of conserved gating glutamate residues is typical for family members that function as antiporters. Strongly outwardly rectifying, electrogenic H(+)/Cl(-)exchanger which mediates the exchange of chloride ions against protons. May play an important role in neuronal cell function through regulation of membrane excitability by protein kinase C. It could help neuronal cells to establish short-term memory. In Rattus norvegicus (Rat), this protein is H(+)/Cl(-) exchange transporter 3 (Clcn3).